A 359-amino-acid polypeptide reads, in one-letter code: sn-1 acyl-lipid omega-3 desaturase (ferredoxin) (359 aa).

2 helical membrane passes run 44 to 64 (LGYF…AAYL) and 67 to 87 (WFFY…LFVV). A Histidine box-1 motif is present at residues 89-93 (HDCGH). Positions 125 to 129 (HRTHH) match the Histidine box-2 motif. The next 3 helical transmembrane spans lie at 153-173 (AWYE…IYLF), 206-226 (LAAF…LFLL), and 228-248 (FYVA…FLHH). Positions 291–295 (HHIFS) match the Histidine box-3 motif.

It belongs to the fatty acid desaturase type 2 family. Requires Fe(2+) as cofactor.

Its subcellular location is the membrane. It catalyses the reaction a 1-[(9Z,12Z)-octadecdienoyl]-2-acyl-glycerolipid + 2 reduced [2Fe-2S]-[ferredoxin] + O2 + 2 H(+) = a 1-[(9Z,12Z,15Z)-octadectrienoyl]-2-acyl-glycerolipid + 2 oxidized [2Fe-2S]-[ferredoxin] + 2 H2O. It carries out the reaction a 1-[(6Z,9Z,12Z)-octadectrienoyl]-2-acyl-glycerolipid + 2 reduced [2Fe-2S]-[ferredoxin] + O2 + 2 H(+) = a 1-[(6Z,9Z,12Z,15Z)-octadectetraenoyl]-2-acyl-glycerolipid + 2 oxidized [2Fe-2S]-[ferredoxin] + 2 H2O. The protein operates within lipid metabolism; polyunsaturated fatty acid biosynthesis. Its function is as follows. Desaturase involved in fatty acid biosynthesis. Introduces a double bond at carbon 15 of linoleoyl and gamma-linolenoyl groups attached to the sn-1 position of the glycerol moiety of membrane glycerolipids. The protein is sn-1 acyl-lipid omega-3 desaturase (ferredoxin) of Synechocystis sp. (strain ATCC 27184 / PCC 6803 / Kazusa).